The chain runs to 81 residues: Accessory gland protein Acp63F (81 aa).

The signal sequence occupies residues 1–16 (MKAIIVFILFISSVHA).

In terms of tissue distribution, main cells of accessory gland and seminal fluid.

The protein localises to the secreted. Its function is as follows. Responsible for physiological and behavioral changes in mated female flies. The protein is Accessory gland protein Acp63F (Acp63F) of Drosophila melanogaster (Fruit fly).